The chain runs to 628 residues: Chaperone protein DnaK (628 aa).

Threonine 195 is subject to Phosphothreonine; by autocatalysis. Positions 545-628 are disordered; sequence QLEENEGAAQ…VIDADFKAAE (84 aa). Residues 555–591 show a composition bias toward basic and acidic residues; the sequence is DAKDALKAAADEAEEAVRSEDDARIESAQKRLEEELR. Low complexity predominate over residues 596–612; that stretch reads AQQAAGQGQPQGAQAQG. Residues 614–628 are compositionally biased toward basic and acidic residues; it reads KADDDVIDADFKAAE.

Belongs to the heat shock protein 70 family.

Acts as a chaperone. In Deinococcus deserti (strain DSM 17065 / CIP 109153 / LMG 22923 / VCD115), this protein is Chaperone protein DnaK.